Consider the following 480-residue polypeptide: uncharacterized protein (480 aa).

Residues 131–207 enclose the PUA domain; the sequence is KKIIKIKNDV…KVVKVRFFIK (77 aa).

In the C-terminal section; belongs to the PAPS reductase family.

This is an uncharacterized protein from Methanocaldococcus jannaschii (strain ATCC 43067 / DSM 2661 / JAL-1 / JCM 10045 / NBRC 100440) (Methanococcus jannaschii).